The sequence spans 424 residues: Mitogen-activated protein kinase mpkA (424 aa).

The 292-residue stretch at 23–314 (YNVTKELGQG…VEEALEHPYL (292 aa)) folds into the Protein kinase domain. Residues 29–37 (LGQGAYGIV) and lysine 52 contribute to the ATP site. The tract at residues 375-424 (QQIAQQTNVPIPDHQQGGWKQEEPKPQEVHAAGGHVNDLESSLQRGMDVQ) is disordered.

It belongs to the protein kinase superfamily. Ser/Thr protein kinase family. Interacts with flbB, flbC, brlA, and rasB. Interacts with fmqA and fmqC. Interacts with hsp90. Mg(2+) serves as cofactor. In terms of processing, phosphorylated by the upstreamm MAPKK mkk2. Phosphorylation is induced during asexual development. Phosphorylation is regulated by rlmA.

It catalyses the reaction L-seryl-[protein] + ATP = O-phospho-L-seryl-[protein] + ADP + H(+). The catalysed reaction is L-threonyl-[protein] + ATP = O-phospho-L-threonyl-[protein] + ADP + H(+). With respect to regulation, activated by threonine and tyrosine phosphorylation by the upstreamm MAPKK mkk2. Its function is as follows. Mitogen-activated protein kinase; part of cell wall integrity (CWI) signaling pathway composed of pkcA, the bck1-mkk2-mpka MAPK cascade and the downstream rlmA transcription regulator. The CWI signaling pathway regulates cell wall integrity and pyomelanin formation. CWI also controls oxidative stress response, gliotoxin production, iron adaptation and asexual development. Finally, CWI is constitutively required for A.fumigatus to cope with the temperature increase found in the mammalian lung environment, during infection. MpkA positively modulates the expression of fumiquinazoline cluster during conidiogenesis and directly phosphorylates fmqC, and perhaps also fmqA. The polypeptide is Mitogen-activated protein kinase mpkA (Aspergillus fumigatus (strain ATCC MYA-4609 / CBS 101355 / FGSC A1100 / Af293) (Neosartorya fumigata)).